A 94-amino-acid polypeptide reads, in one-letter code: Putative septation protein SpoVG (94 aa).

Belongs to the SpoVG family.

Could be involved in septation. The polypeptide is Putative septation protein SpoVG (Acholeplasma laidlawii (strain PG-8A)).